Here is a 661-residue protein sequence, read N- to C-terminus: mRNA 3'-end-processing protein RNA14 (661 aa).

The disordered stretch occupies residues 1-37 (MSGNETPDAGTVKSVSPSSGGSSLPARPTLRERDPND). Low complexity predominate over residues 14 to 23 (SVSPSSGGSS). HAT repeat units lie at residues 67–99 (QQVAEIREVFGQLHELFPLESFLWTIHLNWELE), 101–135 (EESGQVETLLAKCLSGELMNNDIYLWSTYLGYVRR), 149–181 (TVLKAYELVMEKCAVFEPRSMQFWQDYLQFLEQ), 192–225 (SRVEILRKLYKRLLCLPVESLERYWEKYTQWEQE), 262–298 (SLPTKLNQATQQNLPAPGQYDEYQLQIWTKWIQWELD), 307–339 (VLRQRVEYVHRQAVQHMCFAPEIWYNYAMFVDE), and 513–548 (YNLDQLKEIYKKVINYESKFGNLNNVYELERRFFEK).

It is found in the nucleus. The protein localises to the cytoplasm. Component of the cleavage factor IA (CFIA) complex, which is involved in the endonucleolytic cleavage during polyadenylation-dependent pre-mRNA 3'-end formation. This chain is mRNA 3'-end-processing protein RNA14 (RNA14), found in Eremothecium gossypii (strain ATCC 10895 / CBS 109.51 / FGSC 9923 / NRRL Y-1056) (Yeast).